The sequence spans 376 residues: UPF0754 membrane protein Sca_1420 (376 aa).

2 consecutive transmembrane segments (helical) span residues 4–24 (FLVILFMIVIGALIGGITNII) and 356–376 (LLGFLLGGIIGCLQGIIALFV).

It belongs to the UPF0754 family.

It is found in the cell membrane. This chain is UPF0754 membrane protein Sca_1420, found in Staphylococcus carnosus (strain TM300).